Here is a 935-residue protein sequence, read N- to C-terminus: Isoleucine--tRNA ligase (935 aa).

The 'HIGH' region signature appears at 58 to 68 (PYANGNLHLGH). E559 lines the L-isoleucyl-5'-AMP pocket. Residues 600–604 (KMSKS) carry the 'KMSKS' region motif. K603 is a binding site for ATP. The Zn(2+) site is built by C898, C901, C918, and C921.

Belongs to the class-I aminoacyl-tRNA synthetase family. IleS type 1 subfamily. Monomer. Zn(2+) is required as a cofactor.

It is found in the cytoplasm. It catalyses the reaction tRNA(Ile) + L-isoleucine + ATP = L-isoleucyl-tRNA(Ile) + AMP + diphosphate. Catalyzes the attachment of isoleucine to tRNA(Ile). As IleRS can inadvertently accommodate and process structurally similar amino acids such as valine, to avoid such errors it has two additional distinct tRNA(Ile)-dependent editing activities. One activity is designated as 'pretransfer' editing and involves the hydrolysis of activated Val-AMP. The other activity is designated 'posttransfer' editing and involves deacylation of mischarged Val-tRNA(Ile). This is Isoleucine--tRNA ligase from Haemophilus ducreyi (strain 35000HP / ATCC 700724).